We begin with the raw amino-acid sequence, 359 residues long: Probable cinnamyl alcohol dehydrogenase 8A (359 aa).

Cys45 provides a ligand contact to Zn(2+). Position 47 (Thr47) interacts with NADP(+). Residues His67, Glu68, Cys98, Cys101, Cys104, Cys112, and Cys161 each contribute to the Zn(2+) site. NADP(+) is bound by residues Thr165, 186–191, 209–214, Thr249, Gly273, and 296–298; these read GLGGLG, SSSPAK, and SGG.

Belongs to the zinc-containing alcohol dehydrogenase family. As to quaternary structure, homodimer. Zn(2+) serves as cofactor.

The enzyme catalyses (E)-cinnamyl alcohol + NADP(+) = (E)-cinnamaldehyde + NADPH + H(+). It carries out the reaction (E)-coniferol + NADP(+) = (E)-coniferaldehyde + NADPH + H(+). It catalyses the reaction (E)-sinapyl alcohol + NADP(+) = (E)-sinapaldehyde + NADPH + H(+). The catalysed reaction is (E)-4-coumaroyl alcohol + NADP(+) = (E)-4-coumaraldehyde + NADPH + H(+). The enzyme catalyses (E)-caffeyl alcohol + NADP(+) = (E)-caffeyl aldehyde + NADPH + H(+). It functions in the pathway aromatic compound metabolism; phenylpropanoid biosynthesis. In terms of biological role, involved in lignin biosynthesis. Catalyzes the final step specific for the production of lignin monomers. Catalyzes the NADPH-dependent reduction of coniferaldehyde, 5-hydroxyconiferaldehyde, sinapaldehyde, 4-coumaraldehyde and caffeyl aldehyde to their respective alcohols. The sequence is that of Probable cinnamyl alcohol dehydrogenase 8A from Oryza sativa subsp. japonica (Rice).